The following is a 441-amino-acid chain: Xylose isomerase 1 (441 aa).

Catalysis depends on residues H105 and D108. E236, E272, H275, D300, D311, D313, and D343 together coordinate Mg(2+).

It belongs to the xylose isomerase family. Homotetramer. It depends on Mg(2+) as a cofactor.

The protein localises to the cytoplasm. It catalyses the reaction alpha-D-xylose = alpha-D-xylulofuranose. This is Xylose isomerase 1 (xylA1) from Xanthomonas axonopodis pv. citri (strain 306).